The primary structure comprises 291 residues: MSMLPTFGFTQEQVACVCEVLQQGGNIERLGRFLWSLPACEHLHKNESVLKAKAVVAFHRGNFRELYKILESHQFSPHNHAKLQQLWLKAHYIEAEKLRGRPLGAVGKYRVRRKFPLPRSIWDGEETSYCFKEKSRSVLREWYAHNPYPSPREKRELAEATGLTTTQVSNWFKNRRQRDRAAEAKERENNENSNSNSHNPLNGSGKSVLGSSEDEKTPSGTPDHSSSSPALLLSPPPPGLPSLHSLGHPPGPSAVPVPVPGGGGADPLQHHHGLQDSILNPMSANLVDLGS.

The segment at residues 124-183 (GEETSYCFKEKSRSVLREWYAHNPYPSPREKRELAEATGLTTTQVSNWFKNRRQRDRAAE) is a DNA-binding region (homeobox). Positions 168 to 279 (VSNWFKNRRQ…HHHGLQDSIL (112 aa)) are disordered. The segment covering 179–190 (DRAAEAKERENN) has biased composition (basic and acidic residues). The segment covering 224–233 (HSSSSPALLL) has biased composition (low complexity). Residues 249–259 (PPGPSAVPVPV) show a composition bias toward pro residues.

It belongs to the SIX/Sine oculis homeobox family. As to quaternary structure, interacts with TCF7L2; in a canonical Wnt signaling independent manner; prevents transcription of differentiation genes in cap mesenchyme. Interacts with OSR1; form a strong repressor complex with TCF7L2, TLE2 and TLE3 to prevent the activation of Wnt/beta-catenin target genes in the cap mesenchyme. Interacts with HOXA11, EYA1 and EYA3. As to expression, strongly expressed in skeletal muscle. Expressed in Wilms' tumor and in the cap mesenchyme of fetal kidney (at protein level).

It is found in the nucleus. Its function is as follows. Transcription factor that plays an important role in the development of several organs, including kidney, skull and stomach. During kidney development, maintains cap mesenchyme multipotent nephron progenitor cells in an undifferentiated state by opposing the inductive signals emanating from the ureteric bud and cooperates with WNT9B to promote renewing progenitor cells proliferation. Acts through its interaction with TCF7L2 and OSR1 in a canonical Wnt signaling independent manner preventing transcription of differentiation genes in cap mesenchyme such as WNT4. Also acts independently of OSR1 to activate expression of many cap mesenchyme genes, including itself, GDNF and OSR1. During craniofacial development plays a role in growth and elongation of the cranial base through regulation of chondrocyte differentiation. During stomach organogenesis, controls pyloric sphincter formation and mucosal growth through regulation of a gene network including NKX2-5, BMPR1B, BMP4, SOX9 and GREM1. During branchial arch development, acts to mediate HOXA2 control over the insulin-like growth factor pathway. May also be involved in limb tendon and ligament development. Plays a role in cell proliferation and migration. The sequence is that of Homeobox protein SIX2 (SIX2) from Homo sapiens (Human).